The sequence spans 467 residues: Cytochrome P450 85A3 (467 aa).

A helical transmembrane segment spans residues 2–22; the sequence is AIFLIIFVVFFGFCILSTPLF. Cysteine 417 provides a ligand contact to heme.

The protein belongs to the cytochrome P450 family. Heme is required as a cofactor. In terms of tissue distribution, expressed in fruits.

The protein localises to the membrane. The enzyme catalyses 6-deoxocastasterone + reduced [NADPH--hemoprotein reductase] + O2 = 6alpha-hydroxycastasterone + oxidized [NADPH--hemoprotein reductase] + H2O + H(+). It catalyses the reaction 6alpha-hydroxycastasterone + reduced [NADPH--hemoprotein reductase] + O2 = castasterone + oxidized [NADPH--hemoprotein reductase] + 2 H2O + H(+). The catalysed reaction is castasterone + reduced [NADPH--hemoprotein reductase] + O2 = brassinolide + oxidized [NADPH--hemoprotein reductase] + H2O + H(+). It carries out the reaction 6-deoxocastasterone + 2 reduced [NADPH--hemoprotein reductase] + 2 O2 = castasterone + 2 oxidized [NADPH--hemoprotein reductase] + 3 H2O + 2 H(+). It functions in the pathway plant hormone biosynthesis; brassinosteroid biosynthesis. Catalyzes the C6-oxidation step in brassinosteroids biosynthesis. Converts 6-deoxocastasterone (6-deoxoCS) to castasterone (CS), and castasterone (CS) to brassinolide (BL). This chain is Cytochrome P450 85A3, found in Solanum lycopersicum (Tomato).